The sequence spans 32 residues: Photosystem II reaction center protein T (32 aa).

A helical membrane pass occupies residues 3 to 23 (AFAYVLILTLAVVTLFFAVAF).

It belongs to the PsbT family. PSII is composed of 1 copy each of membrane proteins PsbA, PsbB, PsbC, PsbD, PsbE, PsbF, PsbH, PsbI, PsbJ, PsbK, PsbL, PsbM, PsbT, PsbX, PsbY, Psb30/Ycf12, peripheral proteins PsbO, CyanoQ (PsbQ), PsbU, PsbV and a large number of cofactors. It forms dimeric complexes.

The protein resides in the cellular thylakoid membrane. Found at the monomer-monomer interface of the photosystem II (PS II) dimer, plays a role in assembly and dimerization of PSII. PSII is a light-driven water plastoquinone oxidoreductase, using light energy to abstract electrons from H(2)O, generating a proton gradient subsequently used for ATP formation. The polypeptide is Photosystem II reaction center protein T (Prochlorococcus marinus (strain MIT 9301)).